The sequence spans 268 residues: 2,5-diamino-6-ribosylamino-4(3H)-pyrimidinone 5'-phosphate reductase (268 aa).

NADP(+)-binding positions include Thr-68, Asp-72, 103-106, and 191-195; these read SNLR and GAELL.

The protein belongs to the HTP reductase family. As to quaternary structure, homodimer.

It carries out the reaction 2,5-diamino-6-(1-D-ribitylamino)pyrimidin-4(3H)-one 5'-phosphate + NADP(+) = 2,5-diamino-6-(1-D-ribosylamino)pyrimidin-4(3H)-one 5'-phosphate + NADPH + H(+). It catalyses the reaction 2,5-diamino-6-(1-D-ribitylamino)pyrimidin-4(3H)-one 5'-phosphate + NAD(+) = 2,5-diamino-6-(1-D-ribosylamino)pyrimidin-4(3H)-one 5'-phosphate + NADH + H(+). Its pathway is cofactor biosynthesis; riboflavin biosynthesis. In terms of biological role, catalyzes an early step in riboflavin biosynthesis, the NADPH-dependent reduction of the ribose side chain of 2,5-diamino-6-ribosylamino-4(3H)-pyrimidinone 5'-phosphate, yielding 2,5-diamino-6-ribitylamino-4(3H)-pyrimidinone 5'-phosphate. In Schizosaccharomyces pombe (strain 972 / ATCC 24843) (Fission yeast), this protein is 2,5-diamino-6-ribosylamino-4(3H)-pyrimidinone 5'-phosphate reductase.